A 489-amino-acid chain; its full sequence is L-asparagine permease (489 aa).

12 helical membrane passes run 38 to 58, 62 to 82, 113 to 133, 150 to 170, 175 to 195, 223 to 243, 268 to 288, 302 to 322, 357 to 377, 382 to 402, 426 to 446, and 452 to 472; these read HVNM…GAGG, DAGP…FFVV, VAGW…ITAI, VLAL…VKIF, FWFA…GIFL, VMPV…LELV, VALF…SSLY, IGVP…AMSS, YGGI…NYLV, FEIV…IIMI, SPVT…LMWN, and RKTV…WFGV.

Belongs to the amino acid-polyamine-organocation (APC) superfamily. Amino acid transporter (AAT) (TC 2.A.3.1) family.

The protein resides in the cell membrane. This chain is L-asparagine permease (ansP), found in Streptomyces coelicolor (strain ATCC BAA-471 / A3(2) / M145).